The chain runs to 548 residues: (S)-beta-macrocarpene synthase (548 aa).

Mg(2+) is bound by residues aspartate 302 and aspartate 306. Residues aspartate 302, aspartate 306, arginine 443, and asparagine 446 each contribute to the substrate site. Positions 302–306 match the DDXXD motif motif; sequence DDTLD. Asparagine 446, serine 450, and glutamate 454 together coordinate Mg(2+).

It belongs to the terpene synthase family. Monomer. Requires Mg(2+) as cofactor. Mn(2+) is required as a cofactor. In terms of tissue distribution, expressed in roots. Not detected in leaves, unless damaged by herbivory or infected by fungi.

It localises to the cytoplasm. The catalysed reaction is (S)-beta-bisabolene = (S)-beta-macrocarpene. It catalyses the reaction (2E,6E)-farnesyl diphosphate = (S)-beta-bisabolene + diphosphate. The enzyme catalyses (2E)-geranyl diphosphate = (4S)-limonene + diphosphate. It carries out the reaction (2E)-geranyl diphosphate = beta-myrcene + diphosphate. The catalysed reaction is (2E)-geranyl diphosphate = terpinolene + diphosphate. It catalyses the reaction (2E)-geranyl diphosphate + H2O = (S)-linalool + diphosphate. It participates in secondary metabolite biosynthesis; terpenoid biosynthesis. Involved in the biosynthesis of the bicyclic sesquiterpene (S)-beta-macrocarpene. Can use both geranyl diphosphate and farnesyl diphosphate as substrate, but not geranylgeranyl diphosphate. Produces mainly (S)-beta-macrocarpene, but also smaller amounts of beta-bisabolene and (E)-beta-farnesene when used with farnesyl diphosphate as substrate. In the presence of geranyl diphosphate, produces the acyclic monoterpenes beta-myrcene and linalool along with minor amounts of the cyclic compounds limonene, alpha-thujene, sabinene and alpha-terpinolene. May be involved in plant defense. The chain is (S)-beta-macrocarpene synthase from Zea mays (Maize).